We begin with the raw amino-acid sequence, 291 residues long: tRNA-cytidine(32) 2-sulfurtransferase (291 aa).

The PP-loop motif signature appears at 36 to 41 (SGGKDS). The [4Fe-4S] cluster site is built by cysteine 111, cysteine 114, and cysteine 202. The segment at 258 to 291 (RDPWLDAEDEEAEDCGEPPAGDGVVSLGGARGGR) is disordered. A compositionally biased stretch (acidic residues) spans 262 to 273 (LDAEDEEAEDCG).

This sequence belongs to the TtcA family. In terms of assembly, homodimer. Requires Mg(2+) as cofactor. [4Fe-4S] cluster serves as cofactor.

Its subcellular location is the cytoplasm. It carries out the reaction cytidine(32) in tRNA + S-sulfanyl-L-cysteinyl-[cysteine desulfurase] + AH2 + ATP = 2-thiocytidine(32) in tRNA + L-cysteinyl-[cysteine desulfurase] + A + AMP + diphosphate + H(+). It functions in the pathway tRNA modification. Its function is as follows. Catalyzes the ATP-dependent 2-thiolation of cytidine in position 32 of tRNA, to form 2-thiocytidine (s(2)C32). The sulfur atoms are provided by the cysteine/cysteine desulfurase (IscS) system. This chain is tRNA-cytidine(32) 2-sulfurtransferase, found in Anaeromyxobacter dehalogenans (strain 2CP-1 / ATCC BAA-258).